Here is a 396-residue protein sequence, read N- to C-terminus: MINNKTVAEGRYYIGLMSGTSADGIDLALVDFTDKGQQPRLVASFYQSYSAIIADKITSLYQPGSNEIDRAFHLDVELAQLFSQAINALLNQEKLTPEDIIAIGNHGQTIRHRPSGDNPFTLQIGCCQTLATLTGIRVVGQFRRKDMALGGQGAPLVPIFHQQLFTQTTAANFVVNIGGIANITFLPTRDSNQAVLGFDTGPGNALLDDWFTKHHPNSDDCFDKNGAWATTGQVIPLLLEQLMQDDYINSAAPKSTGREYFHLEWLEQQLTAFKEATHSQHETVINHNADIQATLLAFTAQSISDAIMALTAQGKVYLCGGGVHNKALVEALSSRLTASDTVFEINTMQALNIDGDILEAMAFAWLAYAFDQGLDSNLPAVTGASASCTLGSAFLP.

Residue 19–26 coordinates ATP; the sequence is GTSADGID.

The protein belongs to the anhydro-N-acetylmuramic acid kinase family.

The enzyme catalyses 1,6-anhydro-N-acetyl-beta-muramate + ATP + H2O = N-acetyl-D-muramate 6-phosphate + ADP + H(+). It participates in amino-sugar metabolism; 1,6-anhydro-N-acetylmuramate degradation. Its pathway is cell wall biogenesis; peptidoglycan recycling. Catalyzes the specific phosphorylation of 1,6-anhydro-N-acetylmuramic acid (anhMurNAc) with the simultaneous cleavage of the 1,6-anhydro ring, generating MurNAc-6-P. Is required for the utilization of anhMurNAc either imported from the medium or derived from its own cell wall murein, and thus plays a role in cell wall recycling. The sequence is that of Anhydro-N-acetylmuramic acid kinase from Colwellia psychrerythraea (strain 34H / ATCC BAA-681) (Vibrio psychroerythus).